Reading from the N-terminus, the 345-residue chain is MSQSTPLRTDVVVIGAGPVGLSAVFQCGMLKLRCHVVDALEAPGGQLTALYPEKPIYDVPGFPSIPAGELIDRLLEQVAPFTPEFHLSQQVIALEAVAGAEPAAWRLTTSRGVVLEAAAVIIAAGAGAFGPNRPPLDRLEAFEGTSVFYMVSKREAFRGRKVVIAGGGDSAVDWAISLSDVAERVHVVHRRPKFRCAPESAARLDQLAAEGKIDLVIPYQLKALGGTEGRLESVTVADLDGAERQLDADVLLPFFGLAANLGPIAEWGLGVERQTIPVTQATCRTARPGIYAVGDVASYPGKLKLILTGFAEASAAAHNAFHDCRPGEALHFEHSTTTGVPGIPA.

FAD contacts are provided by D38, Q46, Y51, V91, F129, D295, and T336.

It belongs to the ferredoxin--NADP reductase type 2 family. As to quaternary structure, homodimer. The cofactor is FAD.

It catalyses the reaction 2 reduced [2Fe-2S]-[ferredoxin] + NADP(+) + H(+) = 2 oxidized [2Fe-2S]-[ferredoxin] + NADPH. In Rhodospirillum rubrum (strain ATCC 11170 / ATH 1.1.1 / DSM 467 / LMG 4362 / NCIMB 8255 / S1), this protein is Ferredoxin--NADP reductase.